The sequence spans 232 residues: Ribonuclease 3 (232 aa).

Residues 7–136 (AALLEDTIDY…LLGAVFCDGG (130 aa)) form the RNase III domain. Position 49 (Glu-49) interacts with Mg(2+). Asp-53 is a catalytic residue. Positions 122 and 125 each coordinate Mg(2+). Glu-125 is an active-site residue. The DRBM domain maps to 163–232 (DYKTRLQERL…AKQALEYLEE (70 aa)).

The protein belongs to the ribonuclease III family. As to quaternary structure, homodimer. Mg(2+) serves as cofactor.

The protein resides in the cytoplasm. The catalysed reaction is Endonucleolytic cleavage to 5'-phosphomonoester.. Digests double-stranded RNA. Involved in the processing of primary rRNA transcript to yield the immediate precursors to the large and small rRNAs (23S and 16S). Processes some mRNAs, and tRNAs when they are encoded in the rRNA operon. Processes pre-crRNA and tracrRNA of type II CRISPR loci if present in the organism. This Syntrophotalea carbinolica (strain DSM 2380 / NBRC 103641 / GraBd1) (Pelobacter carbinolicus) protein is Ribonuclease 3.